The following is a 439-amino-acid chain: Homogentisate 1,2-dioxygenase (439 aa).

H289 serves as the catalytic Proton acceptor. Fe cation contacts are provided by H332 and E338. Homogentisate contacts are provided by Y347 and H368. A Fe cation-binding site is contributed by H368.

Belongs to the homogentisate dioxygenase family. As to quaternary structure, hexamer; dimer of trimers. Fe cation serves as cofactor.

The catalysed reaction is homogentisate + O2 = 4-maleylacetoacetate + H(+). It functions in the pathway amino-acid degradation; L-phenylalanine degradation; acetoacetate and fumarate from L-phenylalanine: step 4/6. Its function is as follows. Involved in the catabolism of homogentisate (2,5-dihydroxyphenylacetate or 2,5-OH-PhAc), a central intermediate in the degradation of phenylalanine and tyrosine. Catalyzes the oxidative ring cleavage of the aromatic ring of homogentisate to yield maleylacetoacetate. This Xanthomonas euvesicatoria pv. vesicatoria (strain 85-10) (Xanthomonas campestris pv. vesicatoria) protein is Homogentisate 1,2-dioxygenase.